Reading from the N-terminus, the 94-residue chain is Viral macrophage inflammatory protein 2 (94 aa).

The first 20 residues, 1–20, serve as a signal peptide directing secretion; sequence MDTKGILLVAVLTALLCLQS. Intrachain disulfides connect cysteine 34–cysteine 58 and cysteine 35–cysteine 74.

The protein belongs to the intercrine beta (chemokine CC) family. In terms of assembly, monomer. Interacts with human chemokine receptor CXCR4.

It is found in the secreted. In terms of biological role, blocks infection by several different human immunodeficiency virus type 1 (HIV-1) strains. This occurs because vMIP-II binds to a wide range of chemokine receptors. May form part of the response to host defenses contributing to virus-induced neoplasia and may have relevance to KSHV and HIV-I interactions. The sequence is that of Viral macrophage inflammatory protein 2 (ORF K4) from Human herpesvirus 8 type P (isolate GK18) (HHV-8).